The following is a 262-amino-acid chain: Pyridoxine 5'-phosphate synthase (262 aa).

Asparagine 6 is a binding site for 3-amino-2-oxopropyl phosphate. Position 8–9 (8–9 (DH)) interacts with 1-deoxy-D-xylulose 5-phosphate. Arginine 17 lines the 3-amino-2-oxopropyl phosphate pocket. Histidine 41 acts as the Proton acceptor in catalysis. Residues arginine 43 and histidine 48 each coordinate 1-deoxy-D-xylulose 5-phosphate. Glutamate 68 serves as the catalytic Proton acceptor. Threonine 98 lines the 1-deoxy-D-xylulose 5-phosphate pocket. Histidine 210 functions as the Proton donor in the catalytic mechanism. Residues glycine 211 and 232 to 233 (GQ) contribute to the 3-amino-2-oxopropyl phosphate site.

Belongs to the PNP synthase family. As to quaternary structure, homooctamer; tetramer of dimers.

Its subcellular location is the cytoplasm. It carries out the reaction 3-amino-2-oxopropyl phosphate + 1-deoxy-D-xylulose 5-phosphate = pyridoxine 5'-phosphate + phosphate + 2 H2O + H(+). It participates in cofactor biosynthesis; pyridoxine 5'-phosphate biosynthesis; pyridoxine 5'-phosphate from D-erythrose 4-phosphate: step 5/5. Its function is as follows. Catalyzes the complicated ring closure reaction between the two acyclic compounds 1-deoxy-D-xylulose-5-phosphate (DXP) and 3-amino-2-oxopropyl phosphate (1-amino-acetone-3-phosphate or AAP) to form pyridoxine 5'-phosphate (PNP) and inorganic phosphate. The polypeptide is Pyridoxine 5'-phosphate synthase (Campylobacter jejuni subsp. jejuni serotype O:23/36 (strain 81-176)).